A 269-amino-acid chain; its full sequence is 4-hydroxy-tetrahydrodipicolinate reductase (269 aa).

Position 11-16 (11-16 (GPIGRM)) interacts with NAD(+). K39 lines the NADP(+) pocket. Residues 101-103 (GTT) and 125-128 (ASNF) each bind NAD(+). The active-site Proton donor/acceptor is H158. H159 is a binding site for (S)-2,3,4,5-tetrahydrodipicolinate. K162 acts as the Proton donor in catalysis. Residue 168 to 169 (GT) coordinates (S)-2,3,4,5-tetrahydrodipicolinate.

It belongs to the DapB family. In terms of assembly, homotetramer.

It localises to the cytoplasm. The catalysed reaction is (S)-2,3,4,5-tetrahydrodipicolinate + NAD(+) + H2O = (2S,4S)-4-hydroxy-2,3,4,5-tetrahydrodipicolinate + NADH + H(+). It catalyses the reaction (S)-2,3,4,5-tetrahydrodipicolinate + NADP(+) + H2O = (2S,4S)-4-hydroxy-2,3,4,5-tetrahydrodipicolinate + NADPH + H(+). Its pathway is amino-acid biosynthesis; L-lysine biosynthesis via DAP pathway; (S)-tetrahydrodipicolinate from L-aspartate: step 4/4. Functionally, catalyzes the conversion of 4-hydroxy-tetrahydrodipicolinate (HTPA) to tetrahydrodipicolinate. This Buchnera aphidicola subsp. Acyrthosiphon pisum (strain 5A) protein is 4-hydroxy-tetrahydrodipicolinate reductase.